We begin with the raw amino-acid sequence, 464 residues long: Soluble pyridine nucleotide transhydrogenase (464 aa).

35–44 (DSRRVVGGNC) serves as a coordination point for FAD.

This sequence belongs to the class-I pyridine nucleotide-disulfide oxidoreductase family. FAD is required as a cofactor.

It is found in the cytoplasm. It carries out the reaction NAD(+) + NADPH = NADH + NADP(+). Functionally, conversion of NADPH, generated by peripheral catabolic pathways, to NADH, which can enter the respiratory chain for energy generation. The polypeptide is Soluble pyridine nucleotide transhydrogenase (Pseudomonas aeruginosa (strain LESB58)).